Reading from the N-terminus, the 484-residue chain is Putative beta-barrel assembly-enhancing protease (484 aa).

The signal sequence occupies residues 1–23 (MKFFPTRTLLCLCIAAPCLPAIA). Residue His-133 coordinates Zn(2+). Glu-134 is an active-site residue. Positions 137 and 198 each coordinate Zn(2+). Residue Asp-202 is the Proton donor of the active site. 4 TPR repeats span residues 307 to 340 (PSIQ…QPDN), 341 to 374 (HFYL…TPNN), 376 to 408 (VLTI…NPND), and 426 to 459 (AEDL…VELG).

This sequence belongs to the peptidase M48 family. BepA subfamily. Requires Zn(2+) as cofactor.

It localises to the periplasm. In terms of biological role, functions both as a chaperone and a metalloprotease. Maintains the integrity of the outer membrane by promoting either the assembly or the elimination of outer membrane proteins, depending on their folding state. The polypeptide is Putative beta-barrel assembly-enhancing protease (Vibrio cholerae serotype O1 (strain ATCC 39315 / El Tor Inaba N16961)).